Here is a 218-residue protein sequence, read N- to C-terminus: 3-dehydroquinate dehydratase (218 aa).

Residues Glu29 to Arg31 and Arg56 contribute to the 3-dehydroquinate site. His116 functions as the Proton donor/acceptor in the catalytic mechanism. The Schiff-base intermediate with substrate role is filled by Lys142. The 3-dehydroquinate site is built by Arg180, Ser200, and Gln204.

This sequence belongs to the type-I 3-dehydroquinase family. Homodimer.

The catalysed reaction is 3-dehydroquinate = 3-dehydroshikimate + H2O. It participates in metabolic intermediate biosynthesis; chorismate biosynthesis; chorismate from D-erythrose 4-phosphate and phosphoenolpyruvate: step 3/7. Functionally, involved in the third step of the chorismate pathway, which leads to the biosynthesis of aromatic amino acids. Catalyzes the cis-dehydration of 3-dehydroquinate (DHQ) and introduces the first double bond of the aromatic ring to yield 3-dehydroshikimate. This chain is 3-dehydroquinate dehydratase, found in Methanococcus maripaludis (strain C5 / ATCC BAA-1333).